The primary structure comprises 209 residues: BAG family molecular chaperone regulator 1 (209 aa).

One can recognise a Ubiquitin-like domain in the interval 7–84 (CSSVQTIVDI…IIVMGGKNAM (78 aa)). The BAG domain occupies 107 to 193 (TYDVNLKDVA…TLLNQNDALL (87 aa)).

Homodimer or homotetramer.

May inhibit the chaperone activity of HSP70/HSC70 by promoting substrate release in an ATP-dependent manner. The sequence is that of BAG family molecular chaperone regulator 1 (bag-1) from Caenorhabditis briggsae.